The following is a 331-amino-acid chain: MPTMKILTEGELRQIVPLDLDAVKCTEDAFRALAVPNAVKMPPILRLDVPDSRGEVDVKTAYIPGLGGFAIKISPGFFDNPKIGLPSTNGMMVLLSSQTGLVQALLLDNGYLTDVRTAAAGAVAAKHLSQQDASVATIFGAGVQARLQLRALTLVRPIRQARIWARDQLKAEALVEQLKLEHSFAISASDDPRQAVSGAHIVVTTTPADRPILVASWLEAGQHVTAMGSDAEHKNELDPAAIARADVYVADSLTQTRRLGELHHAIEAGLIARDAAFPELGEVIAGVKTGRTRESDITIADLTGTGVQDTAIATLAFQRAEERSAGSLFES.

It belongs to the ornithine cyclodeaminase/mu-crystallin family.

This is an uncharacterized protein from Sinorhizobium fredii (strain NBRC 101917 / NGR234).